Consider the following 335-residue polypeptide: Protein-arginine N-acetylglucosaminyltransferase SseK3 (335 aa).

Residues 51–53 (QWF) and Tyr75 each bind UDP-N-acetyl-alpha-D-glucosamine. N-beta-linked (GlcNAc) arginine; by autocatalysis glycans are attached at residues Arg153 and Arg184. 224 to 227 (YLDA) contacts UDP-N-acetyl-alpha-D-glucosamine. Positions 226–228 (DAD) match the DXD motif motif. Asp228 serves as a coordination point for Mn(2+). Glu258 acts as the Proton acceptor in catalysis. Arg305 carries N-beta-linked (GlcNAc) arginine; by autocatalysis glycosylation. Asp325 and Ser327 together coordinate Mn(2+). Residues Ser327 and 332-335 (SSWR) contribute to the UDP-N-acetyl-alpha-D-glucosamine site. N-beta-linked (GlcNAc) arginine; by autocatalysis glycosylation occurs at Arg335.

This sequence belongs to the glycosyltransferase NleB family. Interacts with host TRIM32; without mediating its GlcNAcylation. Mn(2+) is required as a cofactor. Post-translationally, auto-glycosylated: arginine GlcNAcylation is required for activity toward death domain-containing host target proteins.

Its subcellular location is the secreted. The protein localises to the host Golgi apparatus. It carries out the reaction L-arginyl-[protein] + UDP-N-acetyl-alpha-D-glucosamine = N(omega)-(N-acetyl-beta-D-glucosaminyl)-L-arginyl-[protein] + UDP + H(+). Protein-arginine N-acetylglucosaminyltransferase effector that disrupts TNF signaling in infected cells, including NF-kappa-B signaling and apoptosis. Acts by catalyzing the transfer of a single N-acetylglucosamine (GlcNAc) to a conserved arginine residue in the death domain of host proteins such as TRADD, TNFRSF1A/TNFR1 and TNFRSF10B/TRAILR2: arginine GlcNAcylation prevents homotypic/heterotypic death domain interactions and assembly of the oligomeric TNF-alpha receptor complex, thereby disrupting TNF signaling. Also acts on host proteins without a death domain: catalyzes arginine GlcNAcylation of host small Rab GTPase (Rab1, Rab5 and Rab11), thereby preventing GTPase activity and leading to impaired host vesicular protein transport. Also mediates auto-GlcNAcylation, which is required for activity toward death domain-containing host target proteins. The chain is Protein-arginine N-acetylglucosaminyltransferase SseK3 from Salmonella typhimurium (strain SL1344).